The primary structure comprises 84 residues: Toxin BmKaTx13 (84 aa).

The N-terminal stretch at 1–19 (MNYLVMISFALLLMKGVES) is a signal peptide. An LCN-type CS-alpha/beta domain is found at 21–83 (RDAYIAKPEN…VPIRVPGKCH (63 aa)). Cystine bridges form between C31-C82, C35-C55, C41-C65, and C45-C67. R84 is a propeptide (removed by a carboxypeptidase).

The protein belongs to the long (4 C-C) scorpion toxin superfamily. Sodium channel inhibitor family. Alpha subfamily. Expressed by the venom gland.

The protein resides in the secreted. Functionally, alpha toxins bind voltage-independently at site-3 of sodium channels (Nav) and inhibit the inactivation of the activated channels, thereby blocking neuronal transmission. This toxin is active against mammals. In Olivierus martensii (Manchurian scorpion), this protein is Toxin BmKaTx13.